The following is a 331-amino-acid chain: Fe-S cluster assembly protein DRE2 (331 aa).

Residues 1–146 (MSEILLLLHP…MPTFKKPVSS (146 aa)) are N-terminal SAM-like domain. The tract at residues 142–164 (KPVSSPVTLTDTSANNTDAEDDL) is disordered. Polar residues predominate over residues 146-158 (SPVTLTDTSANNT). The linker stretch occupies residues 147–202 (PVTLTDTSANNTDAEDDLSMKRKLDSTKLAYFSDDSSGEEDDLIDENELIADSHKF). 4 residues coordinate [2Fe-2S] cluster: C212, C224, C227, and C229. Residues 212–229 (CELPNGKKRKKACKDCTC) form a fe-S binding site A region. 4 residues coordinate [4Fe-4S] cluster: C294, C297, C305, and C308. 2 short sequence motifs (cx2C motif) span residues 294–297 (CSSC) and 305–308 (CDGC). Residues 294-308 (CSSCALGDAFRCDGC) are fe-S binding site B.

The protein belongs to the anamorsin family. Monomer. Interacts with TAH18. Interacts with MIA40. The cofactor is [2Fe-2S] cluster. It depends on [4Fe-4S] cluster as a cofactor.

The protein resides in the cytoplasm. The protein localises to the mitochondrion intermembrane space. In terms of biological role, component of the cytosolic iron-sulfur (Fe-S) protein assembly (CIA) machinery required for the maturation of extramitochondrial Fe-S proteins. Part of an electron transfer chain functioning in an early step of cytosolic Fe-S biogenesis, facilitating the de novo assembly of a [4Fe-4S] cluster on the scaffold complex CFD1-NBP35. Electrons are transferred to DRE2 from NADPH via the FAD- and FMN-containing protein TAH18. TAH18-DRE2 are also required for the assembly of the diferric tyrosyl radical cofactor of ribonucleotide reductase (RNR), probably by providing electrons for reduction during radical cofactor maturation in the catalytic small subunit RNR2. This chain is Fe-S cluster assembly protein DRE2, found in Clavispora lusitaniae (strain ATCC 42720) (Yeast).